Here is a 155-residue protein sequence, read N- to C-terminus: Probable cyclic pyranopterin monophosphate synthase (155 aa).

Substrate is bound by residues 74–76 (MCH) and 110–111 (ME). Residue Asp-125 is part of the active site.

This sequence belongs to the MoaC family. Homohexamer; trimer of dimers.

The catalysed reaction is (8S)-3',8-cyclo-7,8-dihydroguanosine 5'-triphosphate = cyclic pyranopterin phosphate + diphosphate. The protein operates within cofactor biosynthesis; molybdopterin biosynthesis. Functionally, catalyzes the conversion of (8S)-3',8-cyclo-7,8-dihydroguanosine 5'-triphosphate to cyclic pyranopterin monophosphate (cPMP). The sequence is that of Probable cyclic pyranopterin monophosphate synthase from Methanoregula boonei (strain DSM 21154 / JCM 14090 / 6A8).